The sequence spans 428 residues: Pregnancy-specific beta-1-glycoprotein 3 (428 aa).

Positions 1 to 34 (MGPLSAPPCTQRITWKGLLLTALLLNFWNLPTTA) are cleaved as a signal peptide. The Ig-like V-type domain maps to 35–144 (QVTIEAEPTK…TGHFTFTLYL (110 aa)). N-linked (GlcNAc...) asparagine glycans are attached at residues N104 and N111. The Cell attachment site motif lies at 127–129 (RGD). Ig-like C2-type domains are found at residues 147 to 234 (PKPS…VTLN), 240 to 327 (PKPY…VTLN), and 335 to 410 (PRIY…KSMT). Intrachain disulfides connect C169-C217, C262-C310, and C354-C394. 2 N-linked (GlcNAc...) asparagine glycosylation sites follow: N268 and N303.

This sequence belongs to the immunoglobulin superfamily. CEA family.

It localises to the secreted. The chain is Pregnancy-specific beta-1-glycoprotein 3 (PSG3) from Homo sapiens (Human).